We begin with the raw amino-acid sequence, 466 residues long: Histidinol dehydrogenase, chloroplastic (466 aa).

Residues 1–30 (MSLNLSRLSLLSSPRISISTHAPRKGYVCC) constitute a chloroplast transit peptide. Tyr155, Gln217, and Asn240 together coordinate NAD(+). Ser266, Gln288, and His291 together coordinate substrate. Residues Gln288 and His291 each coordinate Zn(2+). Catalysis depends on proton acceptor residues Glu356 and His357. The substrate site is built by His357, Asp390, Glu444, and His449. Asp390 is a Zn(2+) binding site. Zn(2+) is bound at residue His449.

The protein belongs to the histidinol dehydrogenase family. Requires Zn(2+) as cofactor.

Its subcellular location is the plastid. The protein resides in the chloroplast. It catalyses the reaction L-histidinol + 2 NAD(+) + H2O = L-histidine + 2 NADH + 3 H(+). It functions in the pathway amino-acid biosynthesis; L-histidine biosynthesis; L-histidine from 5-phospho-alpha-D-ribose 1-diphosphate: step 9/9. In terms of biological role, catalyzes the sequential NAD-dependent oxidations of L-histidinol to L-histidinaldehyde and then to L-histidine. This chain is Histidinol dehydrogenase, chloroplastic (HISN8), found in Arabidopsis thaliana (Mouse-ear cress).